Here is a 148-residue protein sequence, read N- to C-terminus: uncharacterized protein (148 aa).

Helical transmembrane passes span 25–45, 85–105, and 118–138; these read FCTV…LLTA, IVRF…LLYL, and LAAT…WVFG.

It belongs to the GtrA family.

The protein resides in the cell membrane. This is an uncharacterized protein from Bacillus subtilis (strain 168).